Consider the following 296-residue polypeptide: uncharacterized protein (296 aa).

2 consecutive transmembrane segments (helical) span residues 82-102 and 117-137; these read VVAPLPVVIHAGAMSILWSVQ and ISVLALVLLGSLGIGVLSAIF.

It localises to the cell membrane. This is an uncharacterized protein from Sinorhizobium fredii (strain NBRC 101917 / NGR234).